The primary structure comprises 513 residues: ATP synthase subunit alpha (513 aa).

Residue 169 to 176 (GDRQTGKT) participates in ATP binding.

It belongs to the ATPase alpha/beta chains family. As to quaternary structure, F-type ATPases have 2 components, CF(1) - the catalytic core - and CF(0) - the membrane proton channel. CF(1) has five subunits: alpha(3), beta(3), gamma(1), delta(1), epsilon(1). CF(0) has three main subunits: a(1), b(2) and c(9-12). The alpha and beta chains form an alternating ring which encloses part of the gamma chain. CF(1) is attached to CF(0) by a central stalk formed by the gamma and epsilon chains, while a peripheral stalk is formed by the delta and b chains.

The protein resides in the cell inner membrane. It catalyses the reaction ATP + H2O + 4 H(+)(in) = ADP + phosphate + 5 H(+)(out). Its function is as follows. Produces ATP from ADP in the presence of a proton gradient across the membrane. The alpha chain is a regulatory subunit. The sequence is that of ATP synthase subunit alpha from Vibrio vulnificus (strain CMCP6).